The chain runs to 166 residues: NAD(P)H-quinone oxidoreductase subunit I, chloroplastic (166 aa).

4Fe-4S ferredoxin-type domains lie at 55–84 (GRIH…VDWK) and 95–124 (LNYS…MTEE). Positions 64, 67, 70, 74, 104, 107, 110, and 114 each coordinate [4Fe-4S] cluster.

Belongs to the complex I 23 kDa subunit family. NDH is composed of at least 16 different subunits, 5 of which are encoded in the nucleus. Requires [4Fe-4S] cluster as cofactor.

The protein resides in the plastid. The protein localises to the chloroplast thylakoid membrane. The catalysed reaction is a plastoquinone + NADH + (n+1) H(+)(in) = a plastoquinol + NAD(+) + n H(+)(out). It catalyses the reaction a plastoquinone + NADPH + (n+1) H(+)(in) = a plastoquinol + NADP(+) + n H(+)(out). In terms of biological role, NDH shuttles electrons from NAD(P)H:plastoquinone, via FMN and iron-sulfur (Fe-S) centers, to quinones in the photosynthetic chain and possibly in a chloroplast respiratory chain. The immediate electron acceptor for the enzyme in this species is believed to be plastoquinone. Couples the redox reaction to proton translocation, and thus conserves the redox energy in a proton gradient. In Melampodium leucanthum (Black foot daisy), this protein is NAD(P)H-quinone oxidoreductase subunit I, chloroplastic.